A 465-amino-acid polypeptide reads, in one-letter code: Anthocyanidin 3-O-glucosyltransferase 2 (465 aa).

The Proton acceptor role is filled by H22. An anthocyanidin is bound by residues H22 and Q87. Residue D122 is the Charge relay of the active site. T145 lines the UDP-alpha-D-glucose pocket. An anthocyanidin is bound at residue H154. UDP-alpha-D-glucose is bound by residues A345, Q347, H362, W365, N366, S367, and E370. Position 385 (G385) interacts with an anthocyanidin. The UDP-alpha-D-glucose site is built by D386 and Q387.

This sequence belongs to the UDP-glycosyltransferase family. In terms of tissue distribution, highest expression detected in fruit, with very low levels detected in petal and leaf.

The catalysed reaction is an anthocyanidin + UDP-alpha-D-glucose + H(+) = an anthocyanidin 3-O-beta-D-glucoside + UDP. It catalyses the reaction pelargonidin + UDP-alpha-D-glucose = pelargonidin 3-O-beta-D-glucoside + UDP. The enzyme catalyses cyanidin + UDP-alpha-D-glucose = cyanidin 3-O-beta-D-glucoside + UDP + H(+). Its pathway is pigment biosynthesis; anthocyanin biosynthesis. In terms of biological role, in the presence of other necessary color factors, this glycosylation reaction allows the accumulation of anthocyanin pigments. Anthocyanidins are the preferred substrates, while flavonols are only a minor substrate in vitro. The polypeptide is Anthocyanidin 3-O-glucosyltransferase 2 (Fragaria ananassa (Strawberry)).